The sequence spans 294 residues: Nucleotide-binding protein LCA_0526 (294 aa).

Position 12 to 19 (12 to 19 (GMSGAGKT)) interacts with ATP. A GTP-binding site is contributed by 62–65 (DLRS).

The protein belongs to the RapZ-like family.

In terms of biological role, displays ATPase and GTPase activities. The protein is Nucleotide-binding protein LCA_0526 of Latilactobacillus sakei subsp. sakei (strain 23K) (Lactobacillus sakei subsp. sakei).